The chain runs to 842 residues: Microcephalin (842 aa).

A BRCT 1 domain is found at 1–93; it reads MAAPILKDVV…AHIDESLFPA (93 aa). Ser279, Ser287, Ser296, and Ser333 each carry phosphoserine. The residue at position 335 (Thr335) is a Phosphothreonine. Residues 346–359 show a composition bias toward basic residues; that stretch reads HSRPRSSSVKRKRV. Disordered stretches follow at residues 346 to 375, 418 to 443, and 563 to 624; these read HSRPRSSSVKRKRVSYGFHSPPKEKCKRKR, PDNLKERNSENLPPKSQLPSNPAQFS, and VGLK…PTRR. Polar residues-rich tracts occupy residues 434–443 and 566–582; these read QLPSNPAQFS and KSTQDKGTTSKISNSSE. Positions 586-608 are enriched in basic and acidic residues; the sequence is PSEHEPRSVVDCNVERSAEEKEN. BRCT domains are found at residues 647 to 737 and 758 to 840; these read SGKG…PFEL and YRGT…NYLL.

In terms of assembly, interacts with CDC27 and maybe other components of the APC/C complex. Interacts with histone variant H2AX under DNA damage conditions.

Its subcellular location is the cytoplasm. It is found in the cytoskeleton. The protein resides in the microtubule organizing center. The protein localises to the centrosome. Implicated in chromosome condensation and DNA damage induced cellular responses. May play a role in neurogenesis and regulation of the size of the cerebral cortex. The polypeptide is Microcephalin (Macaca fascicularis (Crab-eating macaque)).